The following is a 109-amino-acid chain: Heterogeneous nuclear ribonucleoprotein-like protein HD40 (109 aa).

Residues 1 to 36 (EEVSNGQEHTEGMXQGEXNXIXVEEHHEGEKNSHLV) are disordered. A compositionally biased stretch (basic and acidic residues) spans 23–36 (VEEHHEGEKNSHLV). The 11-residue stretch at 40–50 (EEKKLFVGALS) folds into the RRM domain. Residues arginine 102 and arginine 105 each carry the asymmetric dimethylarginine modification.

It localises to the cytoplasm. The protein resides in the nucleus. The polypeptide is Heterogeneous nuclear ribonucleoprotein-like protein HD40 (Artemia salina (Brine shrimp)).